A 156-amino-acid chain; its full sequence is AP-1 complex subunit sigma-1 (156 aa).

It belongs to the adaptor complexes small subunit family. Adaptor protein complex 1 (AP-1) is a heterotetramer composed of two large adaptins (gamma-type subunit and beta-type subunit), a medium adaptin (mu-type subunit) and a small adaptin (sigma-type subunit).

Its subcellular location is the golgi apparatus. It localises to the trans-Golgi network. It is found in the cytoplasmic vesicle. The protein resides in the clathrin-coated vesicle membrane. Subunit of clathrin-associated adaptor protein complex 1 that plays a role in protein sorting in the trans-Golgi network (TGN) and endosomes. The AP complexes mediate the recruitment of clathrin to membranes and the recognition of sorting signals within the cytosolic tails of transmembrane cargo molecules. Also involved in early steps of phagocytosis and macropinocytosis. The protein is AP-1 complex subunit sigma-1 (ap1s1) of Dictyostelium discoideum (Social amoeba).